The primary structure comprises 101 residues: MKTKLKIGDSVKILSGKDRGRIGKIASINRKKNKVIVESCNMVKKVIKARTPQEKGRIIDKEAAIDISNVMIFVKGTSSRLGIRFENNEKIRYLKKNGQRI.

The protein belongs to the universal ribosomal protein uL24 family. Part of the 50S ribosomal subunit.

Its function is as follows. One of two assembly initiator proteins, it binds directly to the 5'-end of the 23S rRNA, where it nucleates assembly of the 50S subunit. One of the proteins that surrounds the polypeptide exit tunnel on the outside of the subunit. This chain is Large ribosomal subunit protein uL24, found in Borreliella burgdorferi (strain ATCC 35210 / DSM 4680 / CIP 102532 / B31) (Borrelia burgdorferi).